Here is a 337-residue protein sequence, read N- to C-terminus: Phenylalanine--tRNA ligase alpha subunit (337 aa).

A Mg(2+)-binding site is contributed by E252.

This sequence belongs to the class-II aminoacyl-tRNA synthetase family. Phe-tRNA synthetase alpha subunit type 1 subfamily. Tetramer of two alpha and two beta subunits. Requires Mg(2+) as cofactor.

The protein resides in the cytoplasm. The enzyme catalyses tRNA(Phe) + L-phenylalanine + ATP = L-phenylalanyl-tRNA(Phe) + AMP + diphosphate + H(+). This Cellvibrio japonicus (strain Ueda107) (Pseudomonas fluorescens subsp. cellulosa) protein is Phenylalanine--tRNA ligase alpha subunit.